Reading from the N-terminus, the 179-residue chain is Large ribosomal subunit protein uL6c (179 aa).

It belongs to the universal ribosomal protein uL6 family. As to quaternary structure, part of the 50S ribosomal subunit.

Its subcellular location is the plastid. It is found in the chloroplast. Functionally, binds 23S rRNA. This chain is Large ribosomal subunit protein uL6c (rpl6), found in Guillardia theta (Cryptophyte).